Reading from the N-terminus, the 105-residue chain is Vacuolar ATPase assembly integral membrane protein VMA21 homolog (105 aa).

Positions methionine 1–serine 26 are disordered. The Cytoplasmic portion of the chain corresponds to methionine 1 to leucine 36. Residues phenylalanine 37–valine 57 form a helical membrane-spanning segment. The Lumenal segment spans residues leucine 58–lysine 68. The helical transmembrane segment at valine 69–isoleucine 89 threads the bilayer. The Cytoplasmic portion of the chain corresponds to tyrosine 90–aspartate 105.

The protein belongs to the VMA21 family.

Its subcellular location is the endoplasmic reticulum membrane. The protein resides in the endoplasmic reticulum-Golgi intermediate compartment membrane. It localises to the cytoplasmic vesicle. The protein localises to the COPII-coated vesicle membrane. Required for the assembly of the V0 complex of the vacuolar ATPase (V-ATPase) in the endoplasmic reticulum. This is Vacuolar ATPase assembly integral membrane protein VMA21 homolog from Drosophila simulans (Fruit fly).